The following is a 439-amino-acid chain: Trigger factor (439 aa).

In terms of domain architecture, PPIase FKBP-type spans 170-255 (GDTVVIDFDG…IHELKKLETP (86 aa)).

It belongs to the FKBP-type PPIase family. Tig subfamily.

The protein localises to the cytoplasm. The catalysed reaction is [protein]-peptidylproline (omega=180) = [protein]-peptidylproline (omega=0). Involved in protein export. Acts as a chaperone by maintaining the newly synthesized protein in an open conformation. Functions as a peptidyl-prolyl cis-trans isomerase. The polypeptide is Trigger factor (Oenococcus oeni (strain ATCC BAA-331 / PSU-1)).